A 188-amino-acid chain; its full sequence is Large ribosomal subunit protein uL5 (188 aa).

This sequence belongs to the universal ribosomal protein uL5 family. In terms of assembly, part of the 50S ribosomal subunit; contacts the 5S rRNA and probably tRNA. Forms a bridge to the 30S subunit in the 70S ribosome.

This is one of the proteins that bind and probably mediate the attachment of the 5S RNA into the large ribosomal subunit, where it forms part of the central protuberance. In the 70S ribosome it contacts protein S13 of the 30S subunit (bridge B1b), connecting the 2 subunits; this bridge is implicated in subunit movement. May contact the P site tRNA; the 5S rRNA and some of its associated proteins might help stabilize positioning of ribosome-bound tRNAs. This chain is Large ribosomal subunit protein uL5, found in Pyrococcus horikoshii (strain ATCC 700860 / DSM 12428 / JCM 9974 / NBRC 100139 / OT-3).